Reading from the N-terminus, the 159-residue chain is ATP synthase subunit delta, mitochondrial (159 aa).

Residues 1 to 23 constitute a mitochondrion transit peptide; sequence MFRLSAARTLAKSVNTVVAKRTY.

The protein belongs to the ATPase epsilon chain family. F-type ATPases have 2 components, CF(1) - the catalytic core - and CF(0) - the membrane proton channel. CF(1) has five subunits: alpha(3), beta(3), gamma(1), delta(1), epsilon(1). CF(0) has three main subunits: a, b and c.

It localises to the mitochondrion. The protein localises to the mitochondrion inner membrane. Mitochondrial membrane ATP synthase (F(1)F(0) ATP synthase or Complex V) produces ATP from ADP in the presence of a proton gradient across the membrane which is generated by electron transport complexes of the respiratory chain. F-type ATPases consist of two structural domains, F(1) - containing the extramembraneous catalytic core, and F(0) - containing the membrane proton channel, linked together by a central stalk and a peripheral stalk. During catalysis, ATP turnover in the catalytic domain of F(1) is coupled via a rotary mechanism of the central stalk subunits to proton translocation. Part of the complex F(1) domain and of the central stalk which is part of the complex rotary element. Rotation of the central stalk against the surrounding alpha(3)beta(3) subunits leads to hydrolysis of ATP in three separate catalytic sites on the beta subunits. This is ATP synthase subunit delta, mitochondrial (ATP16) from Kluyveromyces lactis (strain ATCC 8585 / CBS 2359 / DSM 70799 / NBRC 1267 / NRRL Y-1140 / WM37) (Yeast).